The sequence spans 132 residues: Small ribosomal subunit protein uS8 (132 aa).

It belongs to the universal ribosomal protein uS8 family. Part of the 30S ribosomal subunit. Contacts proteins S5 and S12.

One of the primary rRNA binding proteins, it binds directly to 16S rRNA central domain where it helps coordinate assembly of the platform of the 30S subunit. In Leuconostoc mesenteroides subsp. mesenteroides (strain ATCC 8293 / DSM 20343 / BCRC 11652 / CCM 1803 / JCM 6124 / NCDO 523 / NBRC 100496 / NCIMB 8023 / NCTC 12954 / NRRL B-1118 / 37Y), this protein is Small ribosomal subunit protein uS8.